A 600-amino-acid polypeptide reads, in one-letter code: Aspartate--tRNA(Asp/Asn) ligase (600 aa).

L-aspartate is bound at residue Glu174. The aspartate stretch occupies residues Gln198–Lys201. L-aspartate is bound at residue Arg220. ATP-binding positions include Arg220–Glu222 and Gln229. His457 contacts L-aspartate. Glu491 provides a ligand contact to ATP. Arg498 contributes to the L-aspartate binding site. Gly543 to Arg546 provides a ligand contact to ATP.

Belongs to the class-II aminoacyl-tRNA synthetase family. Type 1 subfamily. In terms of assembly, homodimer.

Its subcellular location is the cytoplasm. The enzyme catalyses tRNA(Asx) + L-aspartate + ATP = L-aspartyl-tRNA(Asx) + AMP + diphosphate. Aspartyl-tRNA synthetase with relaxed tRNA specificity since it is able to aspartylate not only its cognate tRNA(Asp) but also tRNA(Asn). Reaction proceeds in two steps: L-aspartate is first activated by ATP to form Asp-AMP and then transferred to the acceptor end of tRNA(Asp/Asn). The protein is Aspartate--tRNA(Asp/Asn) ligase of Burkholderia orbicola (strain AU 1054).